We begin with the raw amino-acid sequence, 245 residues long: Small ribosomal subunit protein uS2 (245 aa).

The protein belongs to the universal ribosomal protein uS2 family.

In Pseudomonas putida (strain W619), this protein is Small ribosomal subunit protein uS2.